A 262-amino-acid polypeptide reads, in one-letter code: Thiazole synthase (262 aa).

The active-site Schiff-base intermediate with DXP is the K98. 1-deoxy-D-xylulose 5-phosphate contacts are provided by residues G159, 186–187 (AG), and 208–209 (NT).

This sequence belongs to the ThiG family. Homotetramer. Forms heterodimers with either ThiH or ThiS.

The protein localises to the cytoplasm. The catalysed reaction is [ThiS sulfur-carrier protein]-C-terminal-Gly-aminoethanethioate + 2-iminoacetate + 1-deoxy-D-xylulose 5-phosphate = [ThiS sulfur-carrier protein]-C-terminal Gly-Gly + 2-[(2R,5Z)-2-carboxy-4-methylthiazol-5(2H)-ylidene]ethyl phosphate + 2 H2O + H(+). The protein operates within cofactor biosynthesis; thiamine diphosphate biosynthesis. Catalyzes the rearrangement of 1-deoxy-D-xylulose 5-phosphate (DXP) to produce the thiazole phosphate moiety of thiamine. Sulfur is provided by the thiocarboxylate moiety of the carrier protein ThiS. In vitro, sulfur can be provided by H(2)S. The protein is Thiazole synthase of Hahella chejuensis (strain KCTC 2396).